The chain runs to 207 residues: Vascular endothelial growth factor B (207 aa).

Positions 1–21 (MSPLLRRLLLVALLQLARTQA) are cleaved as a signal peptide. 3 disulfide bridges follow: C47–C89, C78–C122, and C82–C124. The span at 129–139 (KESAVKPDRVA) shows a compositional bias: basic and acidic residues. The interval 129-178 (KESAVKPDRVAIPHHRPQPRSVPGWDSTPGASSPADIIHPTPAPGSSARL) is disordered.

This sequence belongs to the PDGF/VEGF growth factor family. As to quaternary structure, homodimer; disulfide-linked. Can also form heterodimer with VEGF. VEGF-B186 is O-glycosylated. Abundantly expressed in heart, brain, kidney and skeletal muscle.

It is found in the secreted. Growth factor for endothelial cells. VEGF-B167 binds heparin and neuropilin-1 whereas the binding to neuropilin-1 of VEGF-B186 is regulated by proteolysis. VEGF-B seems to be required for normal heart function in adult but is not required for proper development of the cardiovascular system either during development or for angiogenesis in adults. The chain is Vascular endothelial growth factor B (Vegfb) from Mus musculus (Mouse).